Consider the following 641-residue polypeptide: Threonine--tRNA ligase (641 aa).

The TGS domain maps to Met-1–Thr-61. Residues Asp-240–Pro-538 are catalytic. The Zn(2+) site is built by Cys-334, His-385, and His-515.

This sequence belongs to the class-II aminoacyl-tRNA synthetase family. Homodimer. Zn(2+) is required as a cofactor.

Its subcellular location is the cytoplasm. It catalyses the reaction tRNA(Thr) + L-threonine + ATP = L-threonyl-tRNA(Thr) + AMP + diphosphate + H(+). Functionally, catalyzes the attachment of threonine to tRNA(Thr) in a two-step reaction: L-threonine is first activated by ATP to form Thr-AMP and then transferred to the acceptor end of tRNA(Thr). Also edits incorrectly charged L-seryl-tRNA(Thr). The protein is Threonine--tRNA ligase of Aster yellows witches'-broom phytoplasma (strain AYWB).